A 429-amino-acid polypeptide reads, in one-letter code: UDP-N-acetylglucosamine 1-carboxyvinyltransferase 2 (429 aa).

Residue 22 to 23 coordinates phosphoenolpyruvate; sequence KN. Position 92 (arginine 92) interacts with UDP-N-acetyl-alpha-D-glucosamine. The active-site Proton donor is cysteine 116. Cysteine 116 is subject to 2-(S-cysteinyl)pyruvic acid O-phosphothioketal. Residues 121 to 125, aspartate 305, and isoleucine 327 contribute to the UDP-N-acetyl-alpha-D-glucosamine site; that span reads RPIDQ.

It belongs to the EPSP synthase family. MurA subfamily.

It is found in the cytoplasm. The catalysed reaction is phosphoenolpyruvate + UDP-N-acetyl-alpha-D-glucosamine = UDP-N-acetyl-3-O-(1-carboxyvinyl)-alpha-D-glucosamine + phosphate. It participates in cell wall biogenesis; peptidoglycan biosynthesis. Cell wall formation. Adds enolpyruvyl to UDP-N-acetylglucosamine. This is UDP-N-acetylglucosamine 1-carboxyvinyltransferase 2 from Bacillus subtilis (strain 168).